Reading from the N-terminus, the 508-residue chain is Pancreatic alpha-amylase (508 aa).

Residues 1-15 (MKFVLLLSLIGFCWA) form the signal peptide. Pyrrolidone carboxylic acid is present on Q16. Intrachain disulfides connect C43–C101, C85–C130, and C156–C172. 3 residues coordinate Ca(2+): N115, R170, and D179. R207 is a chloride binding site. The active-site Nucleophile is D209. H213 lines the Ca(2+) pocket. E245 serves as the catalytic Proton donor. 2 residues coordinate chloride: N310 and R349. 2 disulfides stabilise this stretch: C390-C396 and C462-C474.

Belongs to the glycosyl hydrolase 13 family. In terms of assembly, monomer. Ca(2+) serves as cofactor. Requires chloride as cofactor.

It localises to the secreted. The protein localises to the extracellular space. The enzyme catalyses Endohydrolysis of (1-&gt;4)-alpha-D-glucosidic linkages in polysaccharides containing three or more (1-&gt;4)-alpha-linked D-glucose units.. This chain is Pancreatic alpha-amylase (Amy2), found in Rattus norvegicus (Rat).